The sequence spans 230 residues: 7-cyano-7-deazaguanine synthase (230 aa).

Leu8 to Thr18 lines the ATP pocket. Residues Cys186, Cys196, Cys199, and Cys202 each coordinate Zn(2+).

Belongs to the QueC family. Requires Zn(2+) as cofactor.

The catalysed reaction is 7-carboxy-7-deazaguanine + NH4(+) + ATP = 7-cyano-7-deazaguanine + ADP + phosphate + H2O + H(+). The protein operates within purine metabolism; 7-cyano-7-deazaguanine biosynthesis. Its function is as follows. Catalyzes the ATP-dependent conversion of 7-carboxy-7-deazaguanine (CDG) to 7-cyano-7-deazaguanine (preQ(0)). This is 7-cyano-7-deazaguanine synthase from Xylella fastidiosa (strain M12).